The sequence spans 317 residues: Transaldolase (317 aa).

The active-site Schiff-base intermediate with substrate is Lys-126.

The protein belongs to the transaldolase family. Type 1 subfamily. Homodimer.

It localises to the cytoplasm. It catalyses the reaction D-sedoheptulose 7-phosphate + D-glyceraldehyde 3-phosphate = D-erythrose 4-phosphate + beta-D-fructose 6-phosphate. It functions in the pathway carbohydrate degradation; pentose phosphate pathway; D-glyceraldehyde 3-phosphate and beta-D-fructose 6-phosphate from D-ribose 5-phosphate and D-xylulose 5-phosphate (non-oxidative stage): step 2/3. Transaldolase is important for the balance of metabolites in the pentose-phosphate pathway. This Burkholderia mallei (strain SAVP1) protein is Transaldolase.